The chain runs to 645 residues: Rab11 family-interacting protein 1 (645 aa).

The 128-residue stretch at 1-128 (MSLAASAGRG…DQGRRKKQWY (128 aa)) folds into the C2 domain. Positions 171–187 (PFGKLKDKIKGKNKDSA) are enriched in basic and acidic residues. A disordered region spans residues 171 to 215 (PFGKLKDKIKGKNKDSASDTASAIVPSVTPSVDSDDESFSKDKKK). Phosphoserine occurs at positions 186, 204, 208, and 236. The disordered stretch occupies residues 259–296 (WDDDAHEDESSSASDVMSHKRTSSTDQQPNQSNFSLPK). The span at 282–293 (STDQQPNQSNFS) shows a compositional bias: polar residues. 9 positions are modified to phosphoserine: S301, S316, S340, S342, S344, S346, S357, S358, and S383. Residues 330-545 (PEARSEIRES…PRPHPVKPMN (216 aa)) are disordered. 2 stretches are compositionally biased toward basic and acidic residues: residues 378-391 (SDRR…KDSM) and 418-432 (AARE…ESKK). S434 is subject to Phosphoserine. A compositionally biased stretch (basic and acidic residues) spans 459 to 487 (SEKEKERKGALVEAQLREEDLMRRPEKDA). The 63-residue stretch at 573-635 (KKYQPSDPAF…EETPNILRVP (63 aa)) folds into the FIP-RBD domain. A necessary for interaction with RAB4A and RAB11A, subcellular location and endosomal recycling region spans residues 581–645 (AFAYAQLTHD…AQMGKKAGKM (65 aa)).

Homooligomer. Interacts with RAB11A, RAB11B, RAB25, RAB4A and RAB14.

It is found in the recycling endosome. Its subcellular location is the cytoplasmic vesicle. A Rab11 effector protein involved in the endosomal recycling process. Also involved in controlling membrane trafficking along the phagocytic pathway and in phagocytosis. Interaction with RAB14 may function in the process of neurite formation. This Mus musculus (Mouse) protein is Rab11 family-interacting protein 1 (Rab11fip1).